We begin with the raw amino-acid sequence, 349 residues long: MATFGAPATANSNPNKSYEVTPSPADSISSLSFSPRADILVATSWDNQVRCWEISRSGASLASAPKASISHDQPVLCSAWKDDGTTVFSGGCDKQAKMWPLLSGGQPVTVAMHEGPIAAMAWIPGMNLLATGSWDKTLKYWDTRQQNPVHTQQLPDKCYTLSVKHPLMVVGTADRNLIVFNLQNPQTEFKRIQSPLKYQTRCVTAFPDQQGFLVGSIEGRVGVHHLDDSQQSKNFTFKCHRDGNDIYSVNSLNFHPVHGTFATAGSDGAFNFWDKDSKQRLKAMSRCNQPIPCSSFNHDGSIYAYAACYDWSKGAENHNPATAKSSIFLHLPQESEVKAKPRVGATGRK.

Residues 1–21 (MATFGAPATANSNPNKSYEVT) form a disordered region. A2 carries the N-acetylalanine modification. Residues 9–21 (TANSNPNKSYEVT) show a composition bias toward polar residues. WD repeat units follow at residues 23 to 62 (SPADSISSLSFSPRADILVATSWDNQVRCWEISRSGASLA), 70 to 109 (SHDQPVLCSAWKDDGTTVFSGGCDKQAKMWPLLSGGQPVT), 112 to 151 (MHEGPIAAMAWIPGMNLLATGSWDKTLKYWDTRQQNPVHT), 153 to 190 (QLPDKCYTLSVKHPLMVVGTADRNLIVFNLQNPQTEFK), and 244 to 283 (NDIYSVNSLNFHPVHGTFATAGSDGAFNFWDKDSKQRLKA). The short motif at 128 to 144 (LLATGSWDKTLKYWDTR) is the DWD box element.

The protein belongs to the WD repeat rae1 family. As to quaternary structure, part of the nuclear pore complex (NPC). The NPC has an eight-fold symmetrical structure comprising a central transport channel and two rings, the cytoplasmic and nuclear rings, to which eight filaments are attached. The cytoplasmic filaments have loose ends, while the nuclear filaments are joined in a distal ring, forming a nuclear basket. NPCs are highly dynamic in configuration and composition, and can be devided in 3 subcomplexes, the NUP62 subcomplex, the NUP107-160 subcomplex and the NUP93 subcomplex, containing approximately 30 different nucleoporin proteins. Interacts with DDB1A.

It localises to the nucleus envelope. Its subcellular location is the nucleus. The protein resides in the nuclear pore complex. The chain is Protein RAE1 from Arabidopsis thaliana (Mouse-ear cress).